The primary structure comprises 637 residues: Protein arginine N-methyltransferase 5 (637 aa).

The residue at position 2 (Ala2) is an N-acetylalanine; in Protein arginine N-methyltransferase 5, N-terminally processed. Residues Arg13–Pro292 form a TIM barrel region. The 308-residue stretch at Leu308–Trp615 folds into the SAM-dependent MTase PRMT-type domain. Residue Tyr324 coordinates S-adenosyl-L-methionine. A protein is bound at residue Phe327. S-adenosyl-L-methionine-binding positions include Lys333–Tyr334, Glu392, and Asp419–Met420. Residues Glu435 and Glu444 each contribute to the a protein site. Residues Glu435 and Glu444 each act as proton donor/acceptor in the active site. The beta barrel stretch occupies residues Pro465–Leu637. The tract at residues Arg488–Pro494 is dimerization.

The protein belongs to the class I-like SAM-binding methyltransferase superfamily. Protein arginine N-methyltransferase family. In terms of assembly, forms, at least, homodimers and homotetramers. Component of the methylosome complex, composed of PRMT5, WDR77 and CLNS1A. Found in a complex composed of PRMT5, WDR77 and RIOK1. RIOK1 and CLNS1A associate with PRMT5 in a mutually exclusive fashion, which allows the recruitment of distinct methylation substrates, such as nucleolin/NCL and Sm proteins, respectively. Interacts with PRDM1. Identified in a complex composed of methylosome and PRMT1 and ERH. Interacts with EGFR; methylates EGFR and stimulates EGFR-mediated ERK activation. Interacts with HOXA9. Interacts with SRGAP2. Found in a complex with COPRS, RUNX1 and CBFB. Interacts with CHTOP; the interaction symmetrically methylates CHTOP, but seems to require the presence of PRMT1. Interacts with EPB41L3; this modulates methylation of target proteins. Component of a high molecular weight E2F-pocket protein complex, CERC (cyclin E1 repressor complex). Associates with SWI/SNF remodeling complexes containing SMARCA2 and SMARCA4. Interacts with JAK2, SSTR1, SUPT5H, BRAF and with active RAF1. Interacts with LSM11, PRMT7 and SNRPD3. Interacts with COPRS; promoting its recruitment on histone H4. Interacts with CLNS1A/pICln. Identified in a complex with CLNS1A/pICln and Sm proteins. Interacts with RPS10. Interacts with WDR77. Interacts with IWS1. Interacts with CRY1. Interacts with POLR2A. Interacts with SMN1/SMN2. Interacts with LYAR; this interaction is direct. Interacts with TTC5/STRAP; this interaction is DNA damage-dependent and promotes PRMT5 interaction with p53/TP53. Interacts with p53/TP53 in response to DNA damage; the interaction is TTC5/STRAP dependent. Interacts with FAM47E; the interaction is direct, promotes PRMT5 localization to chromatin, and does not disrupt its association with WDR77 or STUB1. Interacts with TDRD6. Interacts with STUB1. Interacts with MBD2. Does not interact with MBD3. As to expression, ubiquitous.

It localises to the cytoplasm. The protein localises to the nucleus. It is found in the chromosome. The protein resides in the golgi apparatus. The catalysed reaction is L-arginyl-[protein] + 2 S-adenosyl-L-methionine = N(omega),N(omega)'-dimethyl-L-arginyl-[protein] + 2 S-adenosyl-L-homocysteine + 2 H(+). Activity is increased by EGF, HGF, FGF1 or FGF2 treatments, and slightly decreased by NGF treatment. Its function is as follows. Arginine methyltransferase that can both catalyze the formation of omega-N monomethylarginine (MMA) and symmetrical dimethylarginine (sDMA), with a preference for the formation of MMA. Specifically mediates the symmetrical dimethylation of arginine residues in the small nuclear ribonucleoproteins Sm D1 (SNRPD1) and Sm D3 (SNRPD3); such methylation being required for the assembly and biogenesis of snRNP core particles. Methylates SUPT5H and may regulate its transcriptional elongation properties. May methylate the N-terminal region of MBD2. Mono- and dimethylates arginine residues of myelin basic protein (MBP) in vitro. May play a role in cytokine-activated transduction pathways. Negatively regulates cyclin E1 promoter activity and cellular proliferation. Methylates histone H2A and H4 'Arg-3' during germ cell development. Methylates histone H3 'Arg-8', which may repress transcription. Methylates the Piwi proteins (PIWIL1, PIWIL2 and PIWIL4), methylation of Piwi proteins being required for the interaction with Tudor domain-containing proteins and subsequent localization to the meiotic nuage. Methylates RPS10. Attenuates EGF signaling through the MAPK1/MAPK3 pathway acting at 2 levels. First, monomethylates EGFR; this enhances EGFR 'Tyr-1197' phosphorylation and PTPN6 recruitment, eventually leading to reduced SOS1 phosphorylation. Second, methylates RAF1 and probably BRAF, hence destabilizing these 2 signaling proteins and reducing their catalytic activity. Required for induction of E-selectin and VCAM-1, on the endothelial cells surface at sites of inflammation. Methylates HOXA9. Methylates and regulates SRGAP2 which is involved in cell migration and differentiation. Acts as a transcriptional corepressor in CRY1-mediated repression of the core circadian component PER1 by regulating the H4R3 dimethylation at the PER1 promoter. Methylates GM130/GOLGA2, regulating Golgi ribbon formation. Methylates H4R3 in genes involved in glioblastomagenesis in a CHTOP- and/or TET1-dependent manner. Symmetrically methylates POLR2A, a modification that allows the recruitment to POLR2A of proteins including SMN1/SMN2 and SETX. This is required for resolving RNA-DNA hybrids created by RNA polymerase II, that form R-loop in transcription terminal regions, an important step in proper transcription termination. Along with LYAR, binds the promoter of gamma-globin HBG1/HBG2 and represses its expression. Symmetrically methylates NCL. Methylates p53/TP53; methylation might possibly affect p53/TP53 target gene specificity. Involved in spliceosome maturation and mRNA splicing in prophase I spermatocytes through the catalysis of the symmetrical arginine dimethylation of SNRPB (small nuclear ribonucleoprotein-associated protein) and the interaction with tudor domain-containing protein TDRD6. In Homo sapiens (Human), this protein is Protein arginine N-methyltransferase 5 (PRMT5).